Reading from the N-terminus, the 100-residue chain is Urease subunit gamma (100 aa).

This sequence belongs to the urease gamma subunit family. Heterotrimer of UreA (gamma), UreB (beta) and UreC (alpha) subunits. Three heterotrimers associate to form the active enzyme.

Its subcellular location is the cytoplasm. The catalysed reaction is urea + 2 H2O + H(+) = hydrogencarbonate + 2 NH4(+). It functions in the pathway nitrogen metabolism; urea degradation; CO(2) and NH(3) from urea (urease route): step 1/1. This chain is Urease subunit gamma, found in Paracidovorax citrulli (strain AAC00-1) (Acidovorax citrulli).